The chain runs to 70 residues: Small ribosomal subunit protein bS21 (70 aa).

It belongs to the bacterial ribosomal protein bS21 family.

This Laribacter hongkongensis (strain HLHK9) protein is Small ribosomal subunit protein bS21.